The sequence spans 272 residues: Methylsterol monooxygenase 2-1 (272 aa).

3 helical membrane-spanning segments follow: residues isoleucine 24–leucine 44, leucine 72–methionine 94, and valine 107–histidine 127. The region spanning leucine 113–threonine 259 is the Fatty acid hydroxylase domain. The Histidine box-1 signature appears at histidine 127–histidine 131. The Histidine box-2 motif lies at histidine 140–histidine 144. The next 2 helical transmembrane spans lie at isoleucine 162–threonine 182 and asparagine 209–alanine 229. Residues phenylalanine 231–arginine 237 carry the Histidine box-3 motif.

Belongs to the sterol desaturase family. Fe cation is required as a cofactor. Strongly expressed in leaves, flowers, siliques and developing seeds.

The protein resides in the endoplasmic reticulum membrane. It catalyses the reaction 4,4-dimethyl-5alpha-cholest-7-en-3beta-ol + 6 Fe(II)-[cytochrome b5] + 3 O2 + 5 H(+) = 4alpha-carboxy-4beta-methyl-5alpha-cholest-7-ene-3beta-ol + 6 Fe(III)-[cytochrome b5] + 4 H2O. It carries out the reaction 24-methylidenelophenol + 6 Fe(II)-[cytochrome b5] + 3 O2 + 5 H(+) = 4alpha-carboxy-ergosta-7,24(24(1))-dien-3beta-ol + 6 Fe(III)-[cytochrome b5] + 4 H2O. Its function is as follows. Non-heme iron oxygenase involved in sterols biosynthesis by catalyzing the removal of the second methyl group at the C-4 position. 24-ethylidenelophenol and 24-ethyllophenol are the preferred substrates. Together with SMO2-2, required during embryogenesis, probably by maintaining sterols and auxin homeostasis. The chain is Methylsterol monooxygenase 2-1 from Arabidopsis thaliana (Mouse-ear cress).